The following is a 250-amino-acid chain: Small ribosomal subunit protein uS3 (250 aa).

In terms of domain architecture, KH type-2 spans 39–107; that stretch reads VRAALKKRLY…EVHLNIVEIR (69 aa). Residues 215 to 250 are disordered; sequence LDKRLATESGPAGEGGGRERGDRPDRGDRRDRRDRA. Over residues 230–250 the composition is skewed to basic and acidic residues; that stretch reads GGRERGDRPDRGDRRDRRDRA.

Belongs to the universal ribosomal protein uS3 family. As to quaternary structure, part of the 30S ribosomal subunit. Forms a tight complex with proteins S10 and S14.

Its function is as follows. Binds the lower part of the 30S subunit head. Binds mRNA in the 70S ribosome, positioning it for translation. The sequence is that of Small ribosomal subunit protein uS3 from Caulobacter vibrioides (strain ATCC 19089 / CIP 103742 / CB 15) (Caulobacter crescentus).